A 202-amino-acid polypeptide reads, in one-letter code: Proteasome subunit beta 1 (202 aa).

Residue methionine 1 is a propeptide, removed in mature form; by autocatalysis. Threonine 2 acts as the Nucleophile in catalysis.

Belongs to the peptidase T1B family. As to quaternary structure, the 20S proteasome core is composed of 14 alpha and 14 beta subunits that assemble into four stacked heptameric rings, resulting in a barrel-shaped structure. The two inner rings, each composed of seven catalytic beta subunits, are sandwiched by two outer rings, each composed of seven alpha subunits. The catalytic chamber with the active sites is on the inside of the barrel. Has a gated structure, the ends of the cylinder being occluded by the N-termini of the alpha-subunits. Is capped at one or both ends by the proteasome regulatory ATPase, PAN.

Its subcellular location is the cytoplasm. It catalyses the reaction Cleavage of peptide bonds with very broad specificity.. The formation of the proteasomal ATPase PAN-20S proteasome complex, via the docking of the C-termini of PAN into the intersubunit pockets in the alpha-rings, triggers opening of the gate for substrate entry. Interconversion between the open-gate and close-gate conformations leads to a dynamic regulation of the 20S proteasome proteolysis activity. In terms of biological role, component of the proteasome core, a large protease complex with broad specificity involved in protein degradation. This is Proteasome subunit beta 1 from Pyrobaculum aerophilum (strain ATCC 51768 / DSM 7523 / JCM 9630 / CIP 104966 / NBRC 100827 / IM2).